Consider the following 151-residue polypeptide: MKYSQNQIVYVIFFFIILIVVKPIESVEWSDCSDPSDSFKIEKLEFSPEQPIAGQDLIISVSGYLNKEITKGEAYLAITFDRIPILKLKGNLCDGMGVTCPIPQGNYSTTTINQEIPENVPQGYYYVNFVLYDQDDLQITCVDVQMNITQS.

Positions 1–26 are cleaved as a signal peptide; that stretch reads MKYSQNQIVYVIFFFIILIVVKPIES.

This sequence belongs to the NPC2 family. Monomer.

Functionally, catalyzes the intermembrane transfer of phosphatidylglycerol and phosphatidylinositol. In Dictyostelium discoideum (Social amoeba), this protein is Putative phosphatidylglycerol/phosphatidylinositol transfer protein 3.